A 419-amino-acid polypeptide reads, in one-letter code: Mitogen-activated protein kinase pmk-2 (419 aa).

Residues 49–350 (YNSLKPLGEG…VSSALRHDYL (302 aa)) form the Protein kinase domain. Residues 55 to 63 (LGEGAYGVV) and Lys78 contribute to the ATP site. The active-site Proton acceptor is the Asp210. Thr222 carries the phosphothreonine modification. A TXY motif is present at residues 222-224 (TGY). Tyr224 is modified (phosphotyrosine).

This sequence belongs to the protein kinase superfamily. CMGC Ser/Thr protein kinase family. MAP kinase subfamily. It depends on Mg(2+) as a cofactor. Post-translationally, dually phosphorylated on Thr-222 and Tyr-224, which activates the enzyme.

It localises to the cytoplasm. It catalyses the reaction L-seryl-[protein] + ATP = O-phospho-L-seryl-[protein] + ADP + H(+). The catalysed reaction is L-threonyl-[protein] + ATP = O-phospho-L-threonyl-[protein] + ADP + H(+). With respect to regulation, activated by phosphorylation on threonine and tyrosine. Inhibited by pyridinyl-imidazole related compounds. Its function is as follows. Responds to activation by environmental stress and pro-inflammatory cytokines by phosphorylating downstream targets. The sequence is that of Mitogen-activated protein kinase pmk-2 (pmk-2) from Caenorhabditis elegans.